We begin with the raw amino-acid sequence, 546 residues long: RuBisCO large subunit-binding protein subunit alpha, chloroplastic (546 aa).

A chloroplast-targeting transit peptide spans 1–6 (RFSVRA). At Ser50 the chain carries Phosphoserine.

It belongs to the chaperonin (HSP60) family. Oligomer of probably six alpha and six beta subunits.

The protein resides in the plastid. Its subcellular location is the chloroplast. Functionally, this protein binds RuBisCO small and large subunits and is implicated in the assembly of the enzyme oligomer. The chain is RuBisCO large subunit-binding protein subunit alpha, chloroplastic from Brassica napus (Rape).